A 24-amino-acid polypeptide reads, in one-letter code: RRRRRRRRHRRRRGRRGRRSRGRR.

Residues Arg1–Arg24 form a disordered region.

As to expression, testis.

The protein resides in the nucleus. Its subcellular location is the chromosome. In terms of biological role, protamines substitute for histones in the chromatin of sperm during the haploid phase of spermatogenesis. They compact sperm DNA into a highly condensed, stable and inactive complex. This Octopus vulgaris (Common octopus) protein is Sperm protamine P3.